The sequence spans 154 residues: Probable ubiquitin-conjugating enzyme E2 31 (154 aa).

The UBC core domain occupies 8–153; that stretch reads KAAQRIAMEY…AREFTARHAN (146 aa). Catalysis depends on Cys91, which acts as the Glycyl thioester intermediate.

This sequence belongs to the ubiquitin-conjugating enzyme family.

The enzyme catalyses S-ubiquitinyl-[E1 ubiquitin-activating enzyme]-L-cysteine + [E2 ubiquitin-conjugating enzyme]-L-cysteine = [E1 ubiquitin-activating enzyme]-L-cysteine + S-ubiquitinyl-[E2 ubiquitin-conjugating enzyme]-L-cysteine.. Its pathway is protein modification; protein ubiquitination. Functionally, accepts the ubiquitin from the E1 complex and catalyzes its covalent attachment to other proteins. This is Probable ubiquitin-conjugating enzyme E2 31 (UBC31) from Arabidopsis thaliana (Mouse-ear cress).